A 102-amino-acid chain; its full sequence is Small ribosomal subunit protein uS10 (102 aa).

It belongs to the universal ribosomal protein uS10 family. As to quaternary structure, part of the 30S ribosomal subunit.

Involved in the binding of tRNA to the ribosomes. This chain is Small ribosomal subunit protein uS10, found in Streptococcus thermophilus (strain ATCC BAA-491 / LMD-9).